The primary structure comprises 83 residues: UPF0270 protein CGSHiEE_07180 (83 aa).

Belongs to the UPF0270 family.

This is UPF0270 protein CGSHiEE_07180 from Haemophilus influenzae (strain PittEE).